We begin with the raw amino-acid sequence, 35 residues long: Somatostatin (35 aa).

Cys-24 and Cys-35 are disulfide-bonded.

Belongs to the somatostatin family.

The protein resides in the secreted. Functionally, somatostatin inhibits the release of somatotropin. The chain is Somatostatin (sst) from Lampetra fluviatilis (European river lamprey).